Reading from the N-terminus, the 149-residue chain is Transcription factor MafF (149 aa).

Residues 51–76 form a basic motif region; the sequence is RLKQRRRTLKNRGYAASCRVKRVCQK. The 64-residue stretch at 51-114 folds into the bZIP domain; the sequence is RLKQRRRTLK…DTLRGKYEAL (64 aa). The interval 79-93 is leucine-zipper; that stretch reads LQKQKMELEWEVDKL.

This sequence belongs to the bZIP family. Maf subfamily. In terms of assembly, monomer and homo- or heterodimer. As to expression, highly expressed in the ovary, lower expression in the brain, heart and mesenterium.

It is found in the nucleus. Its function is as follows. Since it lacks a putative transactivation domain, it may behave as a transcriptional repressor when it dimerizes among itself. May also serve as a transcriptional activator by dimerizing with other (usually larger) basic-zipper proteins and recruiting them to specific DNA-binding sites. May be involved in the cellular stress response. The chain is Transcription factor MafF (MAFF) from Gallus gallus (Chicken).